Consider the following 87-residue polypeptide: Large ribosomal subunit protein eL31 (87 aa).

It belongs to the eukaryotic ribosomal protein eL31 family.

This is Large ribosomal subunit protein eL31 from Methanoculleus marisnigri (strain ATCC 35101 / DSM 1498 / JR1).